Reading from the N-terminus, the 360-residue chain is Phenylalanine--tRNA ligase alpha subunit (360 aa).

Glu-260 is a binding site for Mg(2+).

The protein belongs to the class-II aminoacyl-tRNA synthetase family. Phe-tRNA synthetase alpha subunit type 1 subfamily. As to quaternary structure, tetramer of two alpha and two beta subunits. Requires Mg(2+) as cofactor.

Its subcellular location is the cytoplasm. The enzyme catalyses tRNA(Phe) + L-phenylalanine + ATP = L-phenylalanyl-tRNA(Phe) + AMP + diphosphate + H(+). This is Phenylalanine--tRNA ligase alpha subunit from Agrobacterium fabrum (strain C58 / ATCC 33970) (Agrobacterium tumefaciens (strain C58)).